The sequence spans 607 residues: CUB and zona pellucida-like domain-containing protein 1 (607 aa).

A signal peptide spans 1 to 19 (MEVTGRLFIWAILAVSCRA). Residues 20–568 (QLNSTAAEGR…AEISKQPLSH (549 aa)) are Lumenal-facing. Asparagine 22 carries N-linked (GlcNAc...) asparagine glycosylation. Cysteine 32 and cysteine 58 form a disulfide bridge. CUB domains lie at 32–146 (CTAS…YFFS) and 154–265 (CGGY…YAST). A glycan (N-linked (GlcNAc...) asparagine) is linked at asparagine 67. 2 cysteine pairs are disulfide-bonded: cysteine 85/cysteine 107 and cysteine 154/cysteine 180. Asparagine 195 carries N-linked (GlcNAc...) asparagine glycosylation. A disulfide bridge connects residues cysteine 207 and cysteine 229. One can recognise a ZP domain in the interval 276 to 519 (SCASDKMRVI…SRCNQGCVSR (244 aa)). The N-linked (GlcNAc...) asparagine glycan is linked to asparagine 419. Cysteine 442 and cysteine 498 are joined by a disulfide. The chain crosses the membrane as a helical span at residues 569-589 (LHLFSFMVLALNVVIVVTATV). At 590 to 607 (RHFLNRWKDHGYQKLQVY) the chain is on the cytoplasmic side.

In terms of tissue distribution, expressed predominantly in epithelium of uterus and oviduct.

The protein localises to the zymogen granule membrane. In terms of biological role, localized to zymogen granules, where it functions in trypsinogen activation. May indirectly regulate cell motility, cell-cell and cell/extracellular matrix interactions. The chain is CUB and zona pellucida-like domain-containing protein 1 from Rattus norvegicus (Rat).